The primary structure comprises 344 residues: tRNA N6-adenosine threonylcarbamoyltransferase (344 aa).

Residues His-112 and His-116 each coordinate Fe cation. Substrate is bound by residues Leu-134–Gly-138, Asp-167, Gly-180, and Asn-280. Asp-308 is a binding site for Fe cation.

It belongs to the KAE1 / TsaD family. Fe(2+) is required as a cofactor.

It is found in the cytoplasm. The enzyme catalyses L-threonylcarbamoyladenylate + adenosine(37) in tRNA = N(6)-L-threonylcarbamoyladenosine(37) in tRNA + AMP + H(+). Its function is as follows. Required for the formation of a threonylcarbamoyl group on adenosine at position 37 (t(6)A37) in tRNAs that read codons beginning with adenine. Is involved in the transfer of the threonylcarbamoyl moiety of threonylcarbamoyl-AMP (TC-AMP) to the N6 group of A37, together with TsaE and TsaB. TsaD likely plays a direct catalytic role in this reaction. The protein is tRNA N6-adenosine threonylcarbamoyltransferase of Rickettsia massiliae (strain Mtu5).